The primary structure comprises 379 residues: DNA replication and repair protein RecF (379 aa).

An ATP-binding site is contributed by 34-41 (GDNGAGKT).

The protein belongs to the RecF family.

It localises to the cytoplasm. The RecF protein is involved in DNA metabolism; it is required for DNA replication and normal SOS inducibility. RecF binds preferentially to single-stranded, linear DNA. It also seems to bind ATP. The sequence is that of DNA replication and repair protein RecF from Mesorhizobium japonicum (strain LMG 29417 / CECT 9101 / MAFF 303099) (Mesorhizobium loti (strain MAFF 303099)).